Here is a 440-residue protein sequence, read N- to C-terminus: RNA polymerase II C-terminal domain phosphatase-like 4 (440 aa).

A compositionally biased stretch (low complexity) spans 1–36 (MSVASDSPVHSSSSSDDLAAFLDAELDSASDASSGP). Residues 1–49 (MSVASDSPVHSSSSSDDLAAFLDAELDSASDASSGPSEEEEAEDDVESG) are disordered. Residues 37 to 47 (SEEEEAEDDVE) are compositionally biased toward acidic residues. In terms of domain architecture, FCP1 homology spans 118–292 (QRQRKLYLVL…DHRYKSLSEL (175 aa)). The 93-residue stretch at 337–429 (VRKEILKGCK…MKQPEENFGL (93 aa)) folds into the BRCT domain.

In terms of assembly, interacts with RAP74. The cofactor is Mg(2+). Co(2+) is required as a cofactor. It depends on Mn(2+) as a cofactor.

It localises to the nucleus. The catalysed reaction is O-phospho-L-seryl-[protein] + H2O = L-seryl-[protein] + phosphate. The enzyme catalyses O-phospho-L-threonyl-[protein] + H2O = L-threonyl-[protein] + phosphate. Functionally, processively dephosphorylates 'Ser-2' and/or 'Ser-5' of the heptad repeats YSPTSPS in the C-terminal domain of the largest RNA polymerase II subunit (RPB1). This promotes the activity of RNA polymerase II. Required for normal plant growth. The chain is RNA polymerase II C-terminal domain phosphatase-like 4 (CPL4) from Arabidopsis thaliana (Mouse-ear cress).